We begin with the raw amino-acid sequence, 159 residues long: Serine-protein kinase RsbW (159 aa).

This sequence belongs to the anti-sigma-factor family.

It carries out the reaction L-seryl-[protein] + ATP = O-phospho-L-seryl-[protein] + ADP + H(+). The catalysed reaction is L-threonyl-[protein] + ATP = O-phospho-L-threonyl-[protein] + ADP + H(+). In terms of biological role, negative regulator of sigma-B activity. Phosphorylates and inactivates its specific antagonist protein, RsbV. Upon phosphorylation of RsbV, RsbW is released and binds to sigma-B, thereby blocking its ability to form an RNA polymerase holoenzyme (E-sigma-B). The chain is Serine-protein kinase RsbW from Staphylococcus aureus (strain MRSA252).